Here is a 127-residue protein sequence, read N- to C-terminus: Large ribosomal subunit protein uL24B (127 aa).

Belongs to the universal ribosomal protein uL24 family. As to quaternary structure, component of the large ribosomal subunit (LSU). Mature yeast ribosomes consist of a small (40S) and a large (60S) subunit. The 40S small subunit contains 1 molecule of ribosomal RNA (18S rRNA) and 33 different proteins (encoded by 57 genes). The large 60S subunit contains 3 rRNA molecules (25S, 5.8S and 5S rRNA) and 46 different proteins (encoded by 81 genes).

Its subcellular location is the cytoplasm. In terms of biological role, component of the ribosome, a large ribonucleoprotein complex responsible for the synthesis of proteins in the cell. The small ribosomal subunit (SSU) binds messenger RNAs (mRNAs) and translates the encoded message by selecting cognate aminoacyl-transfer RNA (tRNA) molecules. The large subunit (LSU) contains the ribosomal catalytic site termed the peptidyl transferase center (PTC), which catalyzes the formation of peptide bonds, thereby polymerizing the amino acids delivered by tRNAs into a polypeptide chain. The nascent polypeptides leave the ribosome through a tunnel in the LSU and interact with protein factors that function in enzymatic processing, targeting, and the membrane insertion of nascent chains at the exit of the ribosomal tunnel. This is Large ribosomal subunit protein uL24B from Saccharomyces cerevisiae (strain ATCC 204508 / S288c) (Baker's yeast).